The chain runs to 139 residues: Probable disulfide formation protein C (139 aa).

Residues 8–27 (EYALLTAWGASFIATLGSLY) traverse the membrane as a helical segment. Residues cysteine 37 and cysteine 40 are joined by a disulfide bond. The next 2 helical transmembrane spans lie at 42-61 (YQRI…VAKK) and 68-85 (YSLP…YHYA). A disulfide bridge links cysteine 99 with cysteine 104. Residues 113 to 135 (GFVTIPFLALIGFITIAVCSFIV) traverse the membrane as a helical segment.

It belongs to the DsbB family. BdbC subfamily.

Its subcellular location is the cell membrane. In terms of biological role, required for disulfide bond formation in some proteins. The sequence is that of Probable disulfide formation protein C from Bacillus cereus (strain ATCC 14579 / DSM 31 / CCUG 7414 / JCM 2152 / NBRC 15305 / NCIMB 9373 / NCTC 2599 / NRRL B-3711).